Reading from the N-terminus, the 198-residue chain is Probable GTP-binding protein EngB (198 aa).

Positions 22–195 (NRVEVAFVGR…IDNLFLEFAT (174 aa)) constitute an EngB-type G domain. GTP contacts are provided by residues 30–37 (GRSNVGKS), 57–61 (GKTRL), 75–78 (DLPG), 142–145 (TKSD), and 174–176 (FSS). Residues Ser-37 and Thr-59 each coordinate Mg(2+).

Belongs to the TRAFAC class TrmE-Era-EngA-EngB-Septin-like GTPase superfamily. EngB GTPase family. The cofactor is Mg(2+).

Its function is as follows. Necessary for normal cell division and for the maintenance of normal septation. This is Probable GTP-binding protein EngB from Clostridium beijerinckii (strain ATCC 51743 / NCIMB 8052) (Clostridium acetobutylicum).